A 347-amino-acid chain; its full sequence is Ribosomal RNA small subunit methyltransferase C (347 aa).

It belongs to the methyltransferase superfamily. RsmC family. Monomer.

Its subcellular location is the cytoplasm. The enzyme catalyses guanosine(1207) in 16S rRNA + S-adenosyl-L-methionine = N(2)-methylguanosine(1207) in 16S rRNA + S-adenosyl-L-homocysteine + H(+). Functionally, specifically methylates the guanine in position 1207 of 16S rRNA in the 30S particle. The polypeptide is Ribosomal RNA small subunit methyltransferase C (Shewanella baltica (strain OS195)).